Here is a 94-residue protein sequence, read N- to C-terminus: Co-chaperonin GroES (94 aa).

This sequence belongs to the GroES chaperonin family. In terms of assembly, heptamer of 7 subunits arranged in a ring. Interacts with the chaperonin GroEL.

The protein localises to the cytoplasm. In terms of biological role, together with the chaperonin GroEL, plays an essential role in assisting protein folding. The GroEL-GroES system forms a nano-cage that allows encapsulation of the non-native substrate proteins and provides a physical environment optimized to promote and accelerate protein folding. GroES binds to the apical surface of the GroEL ring, thereby capping the opening of the GroEL channel. This chain is Co-chaperonin GroES, found in Lactobacillus gasseri (strain ATCC 33323 / DSM 20243 / BCRC 14619 / CIP 102991 / JCM 1131 / KCTC 3163 / NCIMB 11718 / NCTC 13722 / AM63).